The following is a 464-amino-acid chain: Alpha-2A adrenergic receptor (464 aa).

At 1–47 (MFRQEQRWPRQLWPMGSLQPDSGNASWNGTEGPGGGTRATPYSLQVT) the chain is on the extracellular side. The segment at 13–34 (WPMGSLQPDSGNASWNGTEGPG) is disordered. The segment covering 19–29 (QPDSGNASWNG) has biased composition (polar residues). 2 N-linked (GlcNAc...) asparagine glycosylation sites follow: asparagine 24 and asparagine 28. The chain crosses the membrane as a helical span at residues 48-73 (VTLVCLVGLLILLTVFGNVLVIIAVF). Topologically, residues 74–84 (TSRALKAPQNL) are cytoplasmic. The chain crosses the membrane as a helical span at residues 85–110 (FLVSLASADILVATLVIPFSLANEVM). Over 111–120 (GYWYFGKAWC) the chain is Extracellular. Cysteines 120 and 201 form a disulfide. A helical transmembrane segment spans residues 121-143 (EIYLALDVLFCTSSIVHLCAISL). Residues 144–163 (DRYWSITQAIEYNLKRTPRR) lie on the Cytoplasmic side of the membrane. The chain crosses the membrane as a helical span at residues 164–187 (IKAIIVTVWVISAVISFPPLISFE). Residues 188–206 (KAGGGGQQPAEPRCEINDQ) lie on the Extracellular side of the membrane. Residues 207–231 (KWYVISSSIGSFFAPCLIMILVYVR) form a helical membrane-spanning segment. Residues 232–388 (IYQIAKRRTR…RQNREKRFTF (157 aa)) lie on the Cytoplasmic side of the membrane. The segment at 240–378 (TRVPPSRRGP…GGAKASRWRG (139 aa)) is disordered. Positions 251 to 268 (AHAAAPPGGAERRPNGLG) are enriched in low complexity. The segment covering 312–329 (SSEHAERPPGARRPERGL) has biased composition (basic and acidic residues). Serine 345 is modified (phosphoserine). Positions 354-363 (AGSGTSGSGP) are enriched in gly residues. Arginine 367 is subject to Omega-N-methylarginine. A helical membrane pass occupies residues 389-413 (VLAVVIGVFVVCWFPFFFTYTLTAV). The Extracellular portion of the chain corresponds to 414-423 (GCSVPRTLFK). A helical membrane pass occupies residues 424-444 (FFFWFGYCNSSLNPVIYTIFN). The Cytoplasmic segment spans residues 445-464 (HDFRRAFKKILCRGDRKRIV). Residue cysteine 456 is the site of S-palmitoyl cysteine attachment.

It belongs to the G-protein coupled receptor 1 family. Adrenergic receptor subfamily. ADRA2A sub-subfamily. Component of the ADA2A-containing complex (ATAC), composed of KAT14, KAT2A, TADA2L, TADA3L, ZZ3, MBIP, WDR5, YEATS2, CCDC101 and DR1.

The protein localises to the cell membrane. Its function is as follows. Alpha-2 adrenergic receptors mediate the catecholamine-induced inhibition of adenylate cyclase through the action of G proteins. Component of the ATAC complex, a complex with histone acetyltransferase activity on histones H3 and H4. This chain is Alpha-2A adrenergic receptor, found in Cavia porcellus (Guinea pig).